Reading from the N-terminus, the 508-residue chain is Light-independent protochlorophyllide reductase subunit B (508 aa).

D36 provides a ligand contact to [4Fe-4S] cluster. The active-site Proton donor is D294. 429–430 (GM) contributes to the substrate binding site.

Belongs to the ChlB/BchB/BchZ family. In terms of assembly, protochlorophyllide reductase is composed of three subunits; ChlL, ChlN and ChlB. Forms a heterotetramer of two ChlB and two ChlN subunits. Requires [4Fe-4S] cluster as cofactor.

It catalyses the reaction chlorophyllide a + oxidized 2[4Fe-4S]-[ferredoxin] + 2 ADP + 2 phosphate = protochlorophyllide a + reduced 2[4Fe-4S]-[ferredoxin] + 2 ATP + 2 H2O. It functions in the pathway porphyrin-containing compound metabolism; chlorophyll biosynthesis (light-independent). Its function is as follows. Component of the dark-operative protochlorophyllide reductase (DPOR) that uses Mg-ATP and reduced ferredoxin to reduce ring D of protochlorophyllide (Pchlide) to form chlorophyllide a (Chlide). This reaction is light-independent. The NB-protein (ChlN-ChlB) is the catalytic component of the complex. The polypeptide is Light-independent protochlorophyllide reductase subunit B (Acaryochloris marina (strain MBIC 11017)).